We begin with the raw amino-acid sequence, 535 residues long: Lecithin-cholesterol acyltransferase-like 4 (535 aa).

An N-acetylserine modification is found at S2. S182 acts as the Acyl-ester intermediate in catalysis. Residues D391 and H416 each act as charge relay system in the active site. A compositionally biased stretch (polar residues) spans 488–505 (STVNSISVSQPGDDQNPQ). The tract at residues 488 to 507 (STVNSISVSQPGDDQNPQAE) is disordered.

This sequence belongs to the AB hydrolase superfamily. Lipase family.

The protein is Lecithin-cholesterol acyltransferase-like 4 (LCAT4) of Arabidopsis thaliana (Mouse-ear cress).